The sequence spans 213 residues: Adenylate kinase (213 aa).

10–15 contributes to the ATP binding site; it reads GAGKGT. An NMP region spans residues 30-59; it reads AVGDIFRTIIKTSTSEAELINNYVKQGALI. AMP contacts are provided by residues R36, 57 to 59, 85 to 88, and Q92; these read ALI and GYPR. An LID region spans residues 123–161; sequence GRYSCKNCGKIYNIHFLQPKIEHVCDVCSSSVFDYRKDD. R124 contacts ATP. Zn(2+) contacts are provided by C127 and C130. 133–134 serves as a coordination point for ATP; sequence IY. Positions 147 and 150 each coordinate Zn(2+). Residues R158 and R169 each contribute to the AMP site. Position 197 (K197) interacts with ATP.

The protein belongs to the adenylate kinase family. As to quaternary structure, monomer.

It is found in the cytoplasm. It catalyses the reaction AMP + ATP = 2 ADP. It participates in purine metabolism; AMP biosynthesis via salvage pathway; AMP from ADP: step 1/1. In terms of biological role, catalyzes the reversible transfer of the terminal phosphate group between ATP and AMP. Plays an important role in cellular energy homeostasis and in adenine nucleotide metabolism. The protein is Adenylate kinase of Rickettsia prowazekii (strain Madrid E).